Consider the following 161-residue polypeptide: uncharacterized protein (161 aa).

The protein belongs to the M.jannaschii MJ0150/MJ0739/MJ0745/MJ1460/MJ1642 family.

This is an uncharacterized protein from Methanocaldococcus jannaschii (strain ATCC 43067 / DSM 2661 / JAL-1 / JCM 10045 / NBRC 100440) (Methanococcus jannaschii).